The following is a 520-amino-acid chain: UvrABC system protein C (520 aa).

The 79-residue stretch at 11-89 (EEPGCYQFKD…IKKYQPKYNI (79 aa)) folds into the GIY-YIG domain. Positions 195–230 (QDLIYDLRKEMETFAAAEEYEKALVIRDRIAAIENL) constitute a UVR domain.

This sequence belongs to the UvrC family. In terms of assembly, interacts with UvrB in an incision complex.

The protein localises to the cytoplasm. Its function is as follows. The UvrABC repair system catalyzes the recognition and processing of DNA lesions. UvrC both incises the 5' and 3' sides of the lesion. The N-terminal half is responsible for the 3' incision and the C-terminal half is responsible for the 5' incision. In Methanospirillum hungatei JF-1 (strain ATCC 27890 / DSM 864 / NBRC 100397 / JF-1), this protein is UvrABC system protein C.